Here is a 192-residue protein sequence, read N- to C-terminus: Adenylate kinase (192 aa).

ATP is bound at residue 10–18 (GVPGVGGTT).

It belongs to the archaeal adenylate kinase family. As to quaternary structure, monomer.

The protein localises to the cytoplasm. It catalyses the reaction AMP + ATP = 2 ADP. This chain is Adenylate kinase (adkA), found in Methanotorris igneus (Methanococcus igneus).